Reading from the N-terminus, the 483-residue chain is Regulatory protein ViaA (483 aa).

This sequence belongs to the ViaA family. In terms of assembly, homodimer. Interacts with RavA.

The protein localises to the cytoplasm. Its function is as follows. Component of the RavA-ViaA chaperone complex, which may act on the membrane to optimize the function of some of the respiratory chains. ViaA stimulates the ATPase activity of RavA. The sequence is that of Regulatory protein ViaA from Shigella flexneri.